Reading from the N-terminus, the 64-residue chain is MPKMKTDRGVAKRFKKTANGFKRKQAHLRHILTKKSTKRKRHLRNKCLVAKVDVPAIARQLPYA.

It belongs to the bacterial ribosomal protein bL35 family.

This chain is Large ribosomal subunit protein bL35, found in Shewanella oneidensis (strain ATCC 700550 / JCM 31522 / CIP 106686 / LMG 19005 / NCIMB 14063 / MR-1).